We begin with the raw amino-acid sequence, 759 residues long: Protein MEI2-like 3 (759 aa).

2 consecutive RRM domains span residues 166 to 239 (RTLF…FSIP) and 251 to 324 (GTLV…HSRP).

Probable RNA-binding protein that plays a role in meiosis and vegetative growth. This is Protein MEI2-like 3 (ML3) from Arabidopsis thaliana (Mouse-ear cress).